The primary structure comprises 261 residues: Glucanase inhibitor protein 3 (261 aa).

An N-terminal signal peptide occupies residues 1 to 21 (MKVLSSLAAALIALSAVDVEA). The region spanning 29-260 (ILGGGKVPVG…GIEWINSVIK (232 aa)) is the Peptidase S1 domain. The cysteines at positions 56 and 72 are disulfide-linked. An N-linked (GlcNAc...) asparagine glycan is attached at N108. Cystine bridges form between C183–C195 and C205–C236.

It belongs to the peptidase S1 family.

The protein resides in the secreted. In terms of biological role, secreted effector that suppresses host plant glucan elicitor-mediated defense responses. Targets host endoglucanases and inhibits the endoglucanase-mediated release of elicitor-active glucan oligosaccharides from P.sojae cell walls. This is Glucanase inhibitor protein 3 (GIP3) from Phytophthora sojae (strain P6497) (Soybean stem and root rot agent).